A 227-amino-acid polypeptide reads, in one-letter code: Cytochrome c oxidase subunit 2 (227 aa).

Met1 carries the post-translational modification N-formylmethionine. Residues 1–14 (MAYPMQLGFQDATS) are Mitochondrial intermembrane-facing. A helical transmembrane segment spans residues 15–45 (PIMEELLHFHDHTLMIVFLISSLVLYIISLM). Residues 46-59 (LTTKLTHTSTMDAQ) are Mitochondrial matrix-facing. The chain crosses the membrane as a helical span at residues 60-87 (EVETIWTILPAIILILIALPSLRILYMM). Over 88–227 (DEINNPSLTV…YFEKWSASML (140 aa)) the chain is Mitochondrial intermembrane. Cu cation is bound by residues His161, Cys196, Glu198, Cys200, His204, and Met207. Residue Glu198 participates in Mg(2+) binding. Tyr218 carries the post-translational modification Phosphotyrosine.

The protein belongs to the cytochrome c oxidase subunit 2 family. Component of the cytochrome c oxidase (complex IV, CIV), a multisubunit enzyme composed of 14 subunits. The complex is composed of a catalytic core of 3 subunits MT-CO1, MT-CO2 and MT-CO3, encoded in the mitochondrial DNA, and 11 supernumerary subunits COX4I, COX5A, COX5B, COX6A, COX6B, COX6C, COX7A, COX7B, COX7C, COX8 and NDUFA4, which are encoded in the nuclear genome. The complex exists as a monomer or a dimer and forms supercomplexes (SCs) in the inner mitochondrial membrane with NADH-ubiquinone oxidoreductase (complex I, CI) and ubiquinol-cytochrome c oxidoreductase (cytochrome b-c1 complex, complex III, CIII), resulting in different assemblies (supercomplex SCI(1)III(2)IV(1) and megacomplex MCI(2)III(2)IV(2)). Found in a complex with TMEM177, COA6, COX18, COX20, SCO1 and SCO2. Interacts with TMEM177 in a COX20-dependent manner. Interacts with COX20. Interacts with COX16. The cofactor is Cu cation.

It is found in the mitochondrion inner membrane. It catalyses the reaction 4 Fe(II)-[cytochrome c] + O2 + 8 H(+)(in) = 4 Fe(III)-[cytochrome c] + 2 H2O + 4 H(+)(out). Component of the cytochrome c oxidase, the last enzyme in the mitochondrial electron transport chain which drives oxidative phosphorylation. The respiratory chain contains 3 multisubunit complexes succinate dehydrogenase (complex II, CII), ubiquinol-cytochrome c oxidoreductase (cytochrome b-c1 complex, complex III, CIII) and cytochrome c oxidase (complex IV, CIV), that cooperate to transfer electrons derived from NADH and succinate to molecular oxygen, creating an electrochemical gradient over the inner membrane that drives transmembrane transport and the ATP synthase. Cytochrome c oxidase is the component of the respiratory chain that catalyzes the reduction of oxygen to water. Electrons originating from reduced cytochrome c in the intermembrane space (IMS) are transferred via the dinuclear copper A center (CU(A)) of subunit 2 and heme A of subunit 1 to the active site in subunit 1, a binuclear center (BNC) formed by heme A3 and copper B (CU(B)). The BNC reduces molecular oxygen to 2 water molecules using 4 electrons from cytochrome c in the IMS and 4 protons from the mitochondrial matrix. The polypeptide is Cytochrome c oxidase subunit 2 (MT-CO2) (Bos indicus (Zebu)).